A 280-amino-acid polypeptide reads, in one-letter code: Protein FAM131C (280 aa).

A disordered region spans residues 195 to 280; the sequence is QDSLPSGPSQ…LWEEDEVFYN (86 aa). Over residues 197-211 the composition is skewed to polar residues; that stretch reads SLPSGPSQDDSLQAF. Residues 215–227 show a composition bias toward pro residues; the sequence is SPSPDSCPSPEEP.

Belongs to the FAM131 family.

The polypeptide is Protein FAM131C (FAM131C) (Homo sapiens (Human)).